The following is a 215-amino-acid chain: Large ribosomal subunit protein uL3 (215 aa).

Residues 136 to 155 (GVSISHRSHGSTGQRQDPGK) are disordered. An N5-methylglutamine modification is found at Q151.

The protein belongs to the universal ribosomal protein uL3 family. In terms of assembly, part of the 50S ribosomal subunit. Forms a cluster with proteins L14 and L19. In terms of processing, methylated by PrmB.

Functionally, one of the primary rRNA binding proteins, it binds directly near the 3'-end of the 23S rRNA, where it nucleates assembly of the 50S subunit. In Rickettsia canadensis (strain McKiel), this protein is Large ribosomal subunit protein uL3.